The chain runs to 705 residues: Polyribonucleotide nucleotidyltransferase (705 aa).

The Mg(2+) site is built by D487 and D493. The KH domain maps to 554–613; the sequence is PKILTMAIEPDKIRDVIGPSGKQINQIIDETGVKIDIEQDGSIFISSTDNEMNKKAKQII. The S1 motif domain maps to 623–691; the sequence is GQIYLGKVKR…RQGRVNLSRK (69 aa).

The protein belongs to the polyribonucleotide nucleotidyltransferase family. Requires Mg(2+) as cofactor.

The protein localises to the cytoplasm. It carries out the reaction RNA(n+1) + phosphate = RNA(n) + a ribonucleoside 5'-diphosphate. In terms of biological role, involved in mRNA degradation. Catalyzes the phosphorolysis of single-stranded polyribonucleotides processively in the 3'- to 5'-direction. This chain is Polyribonucleotide nucleotidyltransferase, found in Oceanobacillus iheyensis (strain DSM 14371 / CIP 107618 / JCM 11309 / KCTC 3954 / HTE831).